The primary structure comprises 38 residues: Photosystem II reaction center protein L (38 aa).

Residues 17 to 37 traverse the membrane as a helical segment; that stretch reads SLYWGLLLIFVLAVLFSNYSF.

It belongs to the PsbL family. PSII is composed of 1 copy each of membrane proteins PsbA, PsbB, PsbC, PsbD, PsbE, PsbF, PsbH, PsbI, PsbJ, PsbK, PsbL, PsbM, PsbT, PsbX, PsbY, PsbZ, Psb30/Ycf12, at least 3 peripheral proteins of the oxygen-evolving complex and a large number of cofactors. It forms dimeric complexes.

The protein localises to the plastid. Its subcellular location is the chloroplast thylakoid membrane. Functionally, one of the components of the core complex of photosystem II (PSII). PSII is a light-driven water:plastoquinone oxidoreductase that uses light energy to abstract electrons from H(2)O, generating O(2) and a proton gradient subsequently used for ATP formation. It consists of a core antenna complex that captures photons, and an electron transfer chain that converts photonic excitation into a charge separation. This subunit is found at the monomer-monomer interface and is required for correct PSII assembly and/or dimerization. The protein is Photosystem II reaction center protein L of Bowenia serrulata (Byfield fern).